Here is a 335-residue protein sequence, read N- to C-terminus: Glyceraldehyde-3-phosphate dehydrogenase (335 aa).

Residues 12–13, D36, R80, and S122 each bind NAD(+); that span reads RI. D-glyceraldehyde 3-phosphate contacts are provided by residues 152-154, T183, R198, 211-212, and R234; these read SCT and TG. The active-site Nucleophile is the C153. Position 316 (N316) interacts with NAD(+).

This sequence belongs to the glyceraldehyde-3-phosphate dehydrogenase family. Homotetramer.

Its subcellular location is the cytoplasm. It catalyses the reaction D-glyceraldehyde 3-phosphate + phosphate + NAD(+) = (2R)-3-phospho-glyceroyl phosphate + NADH + H(+). It functions in the pathway carbohydrate degradation; glycolysis; pyruvate from D-glyceraldehyde 3-phosphate: step 1/5. In terms of biological role, catalyzes the oxidative phosphorylation of glyceraldehyde 3-phosphate (G3P) to 1,3-bisphosphoglycerate (BPG) using the cofactor NAD. The first reaction step involves the formation of a hemiacetal intermediate between G3P and a cysteine residue, and this hemiacetal intermediate is then oxidized to a thioester, with concomitant reduction of NAD to NADH. The reduced NADH is then exchanged with the second NAD, and the thioester is attacked by a nucleophilic inorganic phosphate to produce BPG. This Xanthobacter flavus protein is Glyceraldehyde-3-phosphate dehydrogenase (gap).